The primary structure comprises 515 residues: GMP synthase [glutamine-hydrolyzing] (515 aa).

One can recognise a Glutamine amidotransferase type-1 domain in the interval 10–200 (TIIVLDFGSQ…VFGVCGCSEG (191 aa)). Cys-87 serves as the catalytic Nucleophile. Residues His-174 and Glu-176 contribute to the active site. Residues 201–390 (WNMENFIEVE…LGIPDEIVWR (190 aa)) enclose the GMPS ATP-PPase domain. 228–234 (SGGVDSS) serves as a coordination point for ATP.

As to quaternary structure, homodimer.

The enzyme catalyses XMP + L-glutamine + ATP + H2O = GMP + L-glutamate + AMP + diphosphate + 2 H(+). It participates in purine metabolism; GMP biosynthesis; GMP from XMP (L-Gln route): step 1/1. Functionally, catalyzes the synthesis of GMP from XMP. The polypeptide is GMP synthase [glutamine-hydrolyzing] (Bacillus cereus (strain ATCC 14579 / DSM 31 / CCUG 7414 / JCM 2152 / NBRC 15305 / NCIMB 9373 / NCTC 2599 / NRRL B-3711)).